The primary structure comprises 100 residues: Small ribosomal subunit protein uS14 (100 aa).

This sequence belongs to the universal ribosomal protein uS14 family. As to quaternary structure, part of the 30S ribosomal subunit. Contacts proteins S3 and S10.

Its function is as follows. Binds 16S rRNA, required for the assembly of 30S particles and may also be responsible for determining the conformation of the 16S rRNA at the A site. The protein is Small ribosomal subunit protein uS14 of Prochlorococcus marinus (strain NATL2A).